A 1063-amino-acid chain; its full sequence is MQSTDLGSKESGKIWHRKPSPATRDGIIVNIIHNTSDYLPKVLRFLNVAFDSSGDCLIAGDHHGNIYVFDLCGNRFNLVQRTAQACTALAFNLHRKSEFLVALADYSIKCFDTVTKELVSWMRGHESSVFSISVHGSGRYAITTSSDTAQLWDLDTFQRKRKLNILQSVGIQKVFFLPLSNTILSCFKDNSIFAWECDTLVCKYQLPAPPESSNILYKVFAVTRDGRILAAGGKSNHIHLWCLEAKQLFRIIQMPTKVRAIRHLEFLPDSFDAGSNQVLGVLSQDGIMRFINIQTCKLLFEIGSLDDGISSSVISPHGRYIASIMENGSLNIYSVQTLTKEINKPPPPLVKVIEDLPKKKGNSGDLKVKVTSGRVRRPARSRESKIQTRILKQDLTCGFEKKENELSDGLNKKRLQILLKGYGEFPTKYRMFIWRSLLQLPENQTAFSNLIDKGIHVAFLNLQKKYPIKSRKLLRVLQRTLSALAHWSAIFSDTPYLPLLAFPFVKLFQNNQLICFEVVATLIINWCQHWFEYFPNPPINILSMIENVLAFHDKELLQHFINHDVTSQLYAWPLLETVFSEVLTREEWLKLFDNVFSNHPSFLLMTVVAYNICSRAPLLNCKRKDDFEYFFHHRNNLDISAVIREAYRLLDTTPADIHPDSMLDAFVALTKGQYPVFNQYPKFIVDYQTQERERIRNDELDYLRERQAVEEMQAEVDQQRVEDEAWYQKQELLRRAEETRREILLQEEEKMIQQRQRLAAVRRELKVKEMHLQDAARRRLLQLQQDQREMELRRLDDEIERKVHMRDREIAATAKDLEMRHLELESQKRLYEKNLSRNQEAVAKEMKENADAYRQKVDVEEHMFHRLIGTDQTQNQKIHKLIEENLAKAEQACLNTDWRIQALHKQRCSDLHRNECYQEIAKLLRKNRKKEIEVLNAMMEGEAKKWEEAEEKDFHLKSEKKTAALSDASRRWFLEKEIHDAQHPCDKVVPKGRDEEFASGCLPRASQLNDISEMESLTQISLNQRKMHWDAMEQDLMERVRNLRQRLVTQAQNRCQTPHLLAT.

WD repeat units follow at residues 33 to 74 (HNTS…LCGN), 75 to 116 (RFNL…TVTK), 117 to 157 (ELVS…LDTF), 158 to 200 (QRKR…CDTL), 201 to 248 (VCKY…AKQL), 249 to 296 (FRII…IQTC), and 297 to 334 (KLLFEIGSLDDGISSSVISPHGRYIASIMENGSLNIYS). The region spanning 424–599 (EFPTKYRMFI…KLFDNVFSNH (176 aa)) is the Rab-GAP TBC domain. The stretch at 699–951 (ELDYLRERQA…EAKKWEEAEE (253 aa)) forms a coiled coil. Residues 1050–1053 (QAQN) form a mediates direct interaction with PJA2 region.

As to quaternary structure, interacts with PJA2; the interaction is direct and recruits PJA2 to centrosomes. Interacts with OFD1; regulates its activity in cilium assembly. Interacts with PRKACA.

It localises to the cytoplasm. The protein localises to the cytoskeleton. The protein resides in the microtubule organizing center. Its subcellular location is the centrosome. It is found in the centriolar satellite. It localises to the cilium basal body. Its function is as follows. Molecular adapter which is involved in cilium biogenesis. Part of a functional complex including OFD1 a centriolar protein involved in cilium assembly. Could regulate the cAMP-dependent phosphorylation of OFD1, and its subsequent ubiquitination by PJA2 which ultimately leads to its proteasomal degradation. The polypeptide is TBC1 domain family member 31 (Bos taurus (Bovine)).